The primary structure comprises 74 residues: UPF0291 protein EF_0064 (74 aa).

A disordered region spans residues 53–74 (YDPTGEDVTPEKLKEEQQKYFD). Basic and acidic residues predominate over residues 61–74 (TPEKLKEEQQKYFD).

The protein belongs to the UPF0291 family.

It is found in the cytoplasm. This Enterococcus faecalis (strain ATCC 700802 / V583) protein is UPF0291 protein EF_0064.